We begin with the raw amino-acid sequence, 153 residues long: D-aminoacyl-tRNA deacylase (153 aa).

The short motif at 140–141 (GP) is the Gly-cisPro motif, important for rejection of L-amino acids element.

This sequence belongs to the DTD family. Homodimer.

It localises to the cytoplasm. The enzyme catalyses glycyl-tRNA(Ala) + H2O = tRNA(Ala) + glycine + H(+). It catalyses the reaction a D-aminoacyl-tRNA + H2O = a tRNA + a D-alpha-amino acid + H(+). Its function is as follows. An aminoacyl-tRNA editing enzyme that deacylates mischarged D-aminoacyl-tRNAs. Also deacylates mischarged glycyl-tRNA(Ala), protecting cells against glycine mischarging by AlaRS. Acts via tRNA-based rather than protein-based catalysis; rejects L-amino acids rather than detecting D-amino acids in the active site. By recycling D-aminoacyl-tRNA to D-amino acids and free tRNA molecules, this enzyme counteracts the toxicity associated with the formation of D-aminoacyl-tRNA entities in vivo and helps enforce protein L-homochirality. This chain is D-aminoacyl-tRNA deacylase, found in Trichodesmium erythraeum (strain IMS101).